The following is a 181-amino-acid chain: Transcriptional repressor NrdR (181 aa).

A zinc finger spans residues 3 to 34 (CLFCQHTDTRVIDSRVSEDGATIRRRRECEAC). The ATP-cone domain occupies 49–139 (PVIIKKDGGR…VYRSFQDVAD (91 aa)).

It belongs to the NrdR family. Requires Zn(2+) as cofactor.

In terms of biological role, negatively regulates transcription of bacterial ribonucleotide reductase nrd genes and operons by binding to NrdR-boxes. The chain is Transcriptional repressor NrdR from Xylella fastidiosa (strain M12).